The sequence spans 405 residues: L-rhamnonate dehydratase (405 aa).

Positions 33 and 59 each coordinate substrate. Mg(2+)-binding residues include aspartate 226, glutamate 252, and glutamate 280. The active-site Proton acceptor is the histidine 329. Glutamate 349 contributes to the substrate binding site.

This sequence belongs to the mandelate racemase/muconate lactonizing enzyme family. RhamD subfamily. Homooctamer; tetramer of dimers. Mg(2+) serves as cofactor.

It catalyses the reaction L-rhamnonate = 2-dehydro-3-deoxy-L-rhamnonate + H2O. In terms of biological role, catalyzes the dehydration of L-rhamnonate to 2-keto-3-deoxy-L-rhamnonate (KDR). The polypeptide is L-rhamnonate dehydratase (Escherichia coli (strain K12 / DH10B)).